Reading from the N-terminus, the 185-residue chain is Ribosome-recycling factor (185 aa).

The protein belongs to the RRF family.

The protein localises to the cytoplasm. Responsible for the release of ribosomes from messenger RNA at the termination of protein biosynthesis. May increase the efficiency of translation by recycling ribosomes from one round of translation to another. This chain is Ribosome-recycling factor, found in Shewanella baltica (strain OS223).